A 272-amino-acid chain; its full sequence is Sordarin/hypoxysordarin biosynthesis cluster protein P (272 aa).

Asn-6 and Asn-23 each carry an N-linked (GlcNAc...) asparagine glycan. 2 helical membrane passes run 31-51 (FLAS…LLFL) and 67-87 (AYHM…VDLA). Asn-208 carries N-linked (GlcNAc...) asparagine glycosylation.

The protein localises to the membrane. The protein operates within antibiotic biosynthesis. Its function is as follows. Part of the gene cluster that mediates the biosynthesis of sordarin and hypoxysordarin, glycoside antibiotics with a unique tetracyclic diterpene aglycone structure. First, the geranylgeranyl diphosphate synthase sdnC constructs GGDP from farnesyl diphosphate and isopentenyl diphosphate. The diterpene cyclase sdnA then catalyzes the cyclization of GGDP to afford cycloaraneosene. Cycloaraneosene is then hydroxylated four times by the putative cytochrome P450 monooxygenases sdnB, sdnE, sdnF and sdnH to give a hydroxylated cycloaraneosene derivative such as cycloaraneosene-8,9,13,19-tetraol. Although the order of the hydroxylations is unclear, at least C8, C9 and C13 of the cycloaraneosene skeleton are hydroxylated before the sordaricin formation. Dehydration of the 13-hydroxy group of the hydroxylated cycloaraneosene derivative might be catalyzed by an unassigned hypothetical protein such as sdnG and sdnP to construct the cyclopentadiene moiety. The FAD-dependent oxidoreductase sdnN is proposed to catalyze the oxidation at C9 of the hydroxylated cycloaraneosene derivative and also catalyze the Baeyer-Villiger oxidation to give the lactone intermediate. The presumed lactone intermediate would be hydrolyzed to give an acrolein moiety and a carboxylate moiety. Then, [4+2]cycloaddition would occur between the acrolein moiety and the cyclopentadiene moiety to give sordaricin. SdnN might also be involved in the [4+2]cycloaddition after the hypothesized oxidation to accommodate the oxidized product and prompt the [4+2]cycloaddition. GDP-6-deoxy-D-altrose may be biosynthesized from GDP-D-mannose by the putative GDP-mannose-4,6-dehydratase sdnI and the short-chain dehydrogenase sdnK. The glycosyltransferase sdnJ catalyzes the attachment of 6-deoxy-D-altrose onto the 19-hydroxy group of sordaricin to give 4'-O-demethylsordarin. The methyltransferase sdnD would complete the biosynthesis of sordarin. Sordarin can be further modified into hypoxysordarin. The unique acyl chain at the 3'-hydroxy group of hypoxysordarin would be constructed by an iterative type I PKS sdnO and the trans-acting polyketide methyltransferase sdnL. SdnL would be responsible for the introduction of an alpha-methyl group of the polyketide chain. Alternatively, the beta-lactamase-like protein sdnR might be responsible for the cleavage and transfer of the polyketide chain from the PKS sdnO to sordarin. Two putative cytochrome P450 monooxygenases, sdnQ and sdnT, might catalyze the epoxidations of the polyketide chain to complete the biosynthesis of hypoxysordarin. Transcriptional regulators sdnM and sdnS are presumably encoded for the transcriptional regulation of the expression of the sdn gene cluster. This Sordaria araneosa (Pleurage araneosa) protein is Sordarin/hypoxysordarin biosynthesis cluster protein P.